A 127-amino-acid polypeptide reads, in one-letter code: uncharacterized protein (127 aa).

The next 3 helical transmembrane spans lie at 16–36, 59–79, and 100–120; these read AVIG…CYVI, LVGA…SFLF, and IIGF…GGVI.

The protein localises to the cell membrane. This is an uncharacterized protein from Methanocaldococcus jannaschii (strain ATCC 43067 / DSM 2661 / JAL-1 / JCM 10045 / NBRC 100440) (Methanococcus jannaschii).